We begin with the raw amino-acid sequence, 293 residues long: Undecaprenyl-diphosphatase (293 aa).

The next 6 helical transmembrane spans lie at 74-94, 107-127, 134-154, 209-229, 243-263, and 271-291; these read VLVFFAKEIWQIITGWFAGVF, WMIIVATIPVVILGVLGKDLI, MWITASVLILFSLVFILAEKM, FLLAIPAVLGSGLYSLPDAFA, VGTLFAFVVGYISIAWLMKFV, and FAAYRIPAGLLVMLLLALGML.

Belongs to the UppP family.

It is found in the cell membrane. The catalysed reaction is di-trans,octa-cis-undecaprenyl diphosphate + H2O = di-trans,octa-cis-undecaprenyl phosphate + phosphate + H(+). Functionally, catalyzes the dephosphorylation of undecaprenyl diphosphate (UPP). Confers resistance to bacitracin. The chain is Undecaprenyl-diphosphatase from Corynebacterium glutamicum (strain R).